Consider the following 492-residue polypeptide: Bifunctional purine biosynthesis protein PurH (492 aa).

In terms of domain architecture, MGS-like spans Met-1 to Val-144.

Belongs to the PurH family.

It catalyses the reaction (6R)-10-formyltetrahydrofolate + 5-amino-1-(5-phospho-beta-D-ribosyl)imidazole-4-carboxamide = 5-formamido-1-(5-phospho-D-ribosyl)imidazole-4-carboxamide + (6S)-5,6,7,8-tetrahydrofolate. The catalysed reaction is IMP + H2O = 5-formamido-1-(5-phospho-D-ribosyl)imidazole-4-carboxamide. It functions in the pathway purine metabolism; IMP biosynthesis via de novo pathway; 5-formamido-1-(5-phospho-D-ribosyl)imidazole-4-carboxamide from 5-amino-1-(5-phospho-D-ribosyl)imidazole-4-carboxamide (10-formyl THF route): step 1/1. The protein operates within purine metabolism; IMP biosynthesis via de novo pathway; IMP from 5-formamido-1-(5-phospho-D-ribosyl)imidazole-4-carboxamide: step 1/1. This is Bifunctional purine biosynthesis protein PurH from Staphylococcus haemolyticus (strain JCSC1435).